The sequence spans 415 residues: MSGIIDASSALRKRKHLKRGITFTVMIVGQSGSGRSTFINTLCGQQVVDTSTTILLPTDTSTEIDLQLREETVELEDDEGVKIQLNIIDTPGFGDSLDNSPSFEIISDYIRHQYDEILLEESRVRRNPRFKDGRVHCCLYLINPTGHGLKEIDVEFIRQLGSLVNIIPVISKSDSLTRDELKLNKKLIMEDIDRWNLPIYNFPFDEDEISDEDYETNMYLRTLLPFAIIGSNEVYEMGGDVGTIRGRKYPWGILDVEDSSISDFVILRNALLISHLHDLKNYTHEILYERYRTEALSGESVAAESIRPNLTKLNGSSSSSTTTRRNTNPFKQSNNINNDVLNPASDMHGQSTGENNETYMTREEQIRLEEERLKAFEERVQQELLLKRQELLQREKELREIEARLEKEAKIKQEE.

Position 2 is an N-acetylserine (Ser-2). The residue at position 2 (Ser-2) is a Phosphoserine. A Basic motif motif is present at residues 12-19 (RKRKHLKR). Residues 19-298 (RGITFTVMIV…ERYRTEALSG (280 aa)) enclose the Septin-type G domain. The segment at 29-36 (GQSGSGRS) is G1 motif. GTP-binding positions include 29–36 (GQSGSGRS), Gly-92, 172–180 (KSDSLTRDE), Gly-230, and Arg-247. Positions 89 to 92 (DTPG) are G3 motif. The segment at 171-174 (SKSD) is G4 motif. Ser-305 carries the post-translational modification Phosphoserine. Residues 307–360 (RPNLTKLNGSSSSSTTTRRNTNPFKQSNNINNDVLNPASDMHGQSTGENNETYM) form a disordered region. Residues 316–328 (SSSSSTTTRRNTN) are compositionally biased toward low complexity. The residue at position 327 (Thr-327) is a Phosphothreonine. 2 stretches are compositionally biased toward polar residues: residues 329 to 340 (PFKQSNNINNDV) and 348 to 359 (HGQSTGENNETY). The stretch at 354–414 (ENNETYMTRE…LEKEAKIKQE (61 aa)) forms a coiled coil. Lys-412 participates in a covalent cross-link: Glycyl lysine isopeptide (Lys-Gly) (interchain with G-Cter in SUMO).

The protein belongs to the TRAFAC class TrmE-Era-EngA-EngB-Septin-like GTPase superfamily. Septin GTPase family. In terms of assembly, component of the septin complex which consists of CDC3, CDC10, CDC11, CDC12 and probably SHS1 and rearranges to a cortical collar of highly ordered filaments at the mother-bud-neck. A complex formed by CDC3, CDC10, CDC11 and CDC12 is capable of forming long filaments in vitro and the components seem to be present in a 2:2:2:2 arrangement in vivo. The filaments are proposed to be formed by the end-to-end polymerization of CDC3-CDC12-CDC11 complexes with CDC10 serving as a bridge to bundle the polymers into paired filaments. Component of the GIN4 complex composed of at least BNI5, CDC3, CDC10, CDC11, CDC12, GIN4, NAP1 and SHS1. Self-associates. Interacts with BEM4, KCC4, SPR28 and SYP1. Interacts with BNI5. In terms of processing, sumoylated during mitosis on the mother cell side of the bud neck. Sumoylation probably plays a central role in regulating septin ring disassembly during the cell cycle.

The protein resides in the membrane. The protein localises to the bud neck. In terms of biological role, septins are GTPases involved in cytokinesis that assemble early in the cell cycle as a patch at the incipient bud site and form a ring approximate 15 minutes before bud emergence, which transforms into an hour-glass shaped collar of cortical filaments that spans both sides of the mother-bud neck. This collar persists until just before cytokinesis, when it splits into two rings that occupy opposite sides of the neck. The septins at the bud neck serve as a structural scaffold that recruits different components involved in diverse processes at specific stages during the cell cycle. Many proteins bind asymmetrically to the septin collar. The septin assembly is regulated by protein kinases GIN4 and/or CLA4. May act by recruiting MYO1 and HOF1, a protein involved in septation, to the site of cleavage. Septins are also involved in cell morphogenesis, bud site selection, chitin deposition, cell cycle regulation, cell compartmentalization and spore wall formation. CDCd11 with SHS1 11 are involved in the recruitment of BNI5 and thereby ensure efficient localization at the bud neck of MYO1, the type II myosin of the actomyosin contractile ring. This is Cell division control protein 11 from Saccharomyces cerevisiae (strain ATCC 204508 / S288c) (Baker's yeast).